The primary structure comprises 460 residues: Probable lipase C14C8.15 (460 aa).

Over 1–16 the chain is Cytoplasmic; it reads MTLNGNIMKYCLEKGE. A helical; Signal-anchor for type II membrane protein transmembrane segment spans residues 17–37; the sequence is ILISFLLIALESMFRICTVIL. Residues 38-460 lie on the Lumenal side of the membrane; it reads PSPLRNWFYE…LVDGVMNHTI (423 aa). The active-site Nucleophile is S214. N308 carries an N-linked (GlcNAc...) asparagine glycan. Active-site charge relay system residues include D382 and H408. A glycan (N-linked (GlcNAc...) asparagine) is linked at N457.

It belongs to the AB hydrolase superfamily. Lipase family.

It localises to the golgi apparatus. The protein resides in the membrane. Functionally, probable lipase. This Schizosaccharomyces pombe (strain 972 / ATCC 24843) (Fission yeast) protein is Probable lipase C14C8.15.